A 391-amino-acid polypeptide reads, in one-letter code: Formate-dependent phosphoribosylglycinamide formyltransferase (391 aa).

Residues 18-19 and glutamate 78 contribute to the N(1)-(5-phospho-beta-D-ribosyl)glycinamide site; that span reads EL. ATP is bound by residues arginine 110, lysine 151, 156–161, 191–194, and glutamate 199; these read SSGKGQ and EEFI. One can recognise an ATP-grasp domain in the interval 115 to 305; that stretch reads ELAAQQLGVR…EFELHLRAIL (191 aa). Residues glutamate 264 and glutamate 276 each coordinate Mg(2+). Residues aspartate 283, lysine 353, and 360–361 contribute to the N(1)-(5-phospho-beta-D-ribosyl)glycinamide site; that span reads RR.

This sequence belongs to the PurK/PurT family. As to quaternary structure, homodimer.

The catalysed reaction is N(1)-(5-phospho-beta-D-ribosyl)glycinamide + formate + ATP = N(2)-formyl-N(1)-(5-phospho-beta-D-ribosyl)glycinamide + ADP + phosphate + H(+). It functions in the pathway purine metabolism; IMP biosynthesis via de novo pathway; N(2)-formyl-N(1)-(5-phospho-D-ribosyl)glycinamide from N(1)-(5-phospho-D-ribosyl)glycinamide (formate route): step 1/1. Functionally, involved in the de novo purine biosynthesis. Catalyzes the transfer of formate to 5-phospho-ribosyl-glycinamide (GAR), producing 5-phospho-ribosyl-N-formylglycinamide (FGAR). Formate is provided by PurU via hydrolysis of 10-formyl-tetrahydrofolate. In Synechocystis sp. (strain ATCC 27184 / PCC 6803 / Kazusa), this protein is Formate-dependent phosphoribosylglycinamide formyltransferase.